The sequence spans 486 residues: Glutamate--tRNA ligase (486 aa).

Positions 11 to 21 match the 'HIGH' region motif; the sequence is PSPTGVVHIGN. The 'KMSKS' region signature appears at 255 to 259; sequence KLSKR. Lysine 258 is a binding site for ATP.

Belongs to the class-I aminoacyl-tRNA synthetase family. Glutamate--tRNA ligase type 1 subfamily. Monomer.

It localises to the cytoplasm. It catalyses the reaction tRNA(Glu) + L-glutamate + ATP = L-glutamyl-tRNA(Glu) + AMP + diphosphate. Its function is as follows. Catalyzes the attachment of glutamate to tRNA(Glu) in a two-step reaction: glutamate is first activated by ATP to form Glu-AMP and then transferred to the acceptor end of tRNA(Glu). This Streptococcus pneumoniae (strain CGSP14) protein is Glutamate--tRNA ligase.